The sequence spans 450 residues: Glucose-6-phosphate isomerase (450 aa).

Glutamate 291 acts as the Proton donor in catalysis. Active-site residues include histidine 312 and lysine 426.

The protein belongs to the GPI family.

Its subcellular location is the cytoplasm. It catalyses the reaction alpha-D-glucose 6-phosphate = beta-D-fructose 6-phosphate. The protein operates within carbohydrate biosynthesis; gluconeogenesis. It functions in the pathway carbohydrate degradation; glycolysis; D-glyceraldehyde 3-phosphate and glycerone phosphate from D-glucose: step 2/4. Functionally, catalyzes the reversible isomerization of glucose-6-phosphate to fructose-6-phosphate. The sequence is that of Glucose-6-phosphate isomerase from Clostridium perfringens (strain ATCC 13124 / DSM 756 / JCM 1290 / NCIMB 6125 / NCTC 8237 / Type A).